A 304-amino-acid polypeptide reads, in one-letter code: Acetyl-coenzyme A carboxylase carboxyl transferase subunit beta (304 aa).

Positions 25-294 (VWTKCDSCGQ…PSVVESKADT (270 aa)) constitute a CoA carboxyltransferase N-terminal domain. Zn(2+) contacts are provided by C29, C32, C48, and C51. The C4-type zinc-finger motif lies at 29-51 (CDSCGQVLYRAELERNLEVCPKC).

Belongs to the AccD/PCCB family. Acetyl-CoA carboxylase is a heterohexamer composed of biotin carboxyl carrier protein (AccB), biotin carboxylase (AccC) and two subunits each of ACCase subunit alpha (AccA) and ACCase subunit beta (AccD). It depends on Zn(2+) as a cofactor.

It localises to the cytoplasm. The enzyme catalyses N(6)-carboxybiotinyl-L-lysyl-[protein] + acetyl-CoA = N(6)-biotinyl-L-lysyl-[protein] + malonyl-CoA. The protein operates within lipid metabolism; malonyl-CoA biosynthesis; malonyl-CoA from acetyl-CoA: step 1/1. In terms of biological role, component of the acetyl coenzyme A carboxylase (ACC) complex. Biotin carboxylase (BC) catalyzes the carboxylation of biotin on its carrier protein (BCCP) and then the CO(2) group is transferred by the transcarboxylase to acetyl-CoA to form malonyl-CoA. This chain is Acetyl-coenzyme A carboxylase carboxyl transferase subunit beta, found in Yersinia pestis (strain Pestoides F).